The following is a 192-amino-acid chain: Probable nicotinate-nucleotide adenylyltransferase (192 aa).

It belongs to the NadD family.

It catalyses the reaction nicotinate beta-D-ribonucleotide + ATP + H(+) = deamido-NAD(+) + diphosphate. The protein operates within cofactor biosynthesis; NAD(+) biosynthesis; deamido-NAD(+) from nicotinate D-ribonucleotide: step 1/1. Functionally, catalyzes the reversible adenylation of nicotinate mononucleotide (NaMN) to nicotinic acid adenine dinucleotide (NaAD). The chain is Probable nicotinate-nucleotide adenylyltransferase from Bradyrhizobium sp. (strain BTAi1 / ATCC BAA-1182).